Here is a 563-residue protein sequence, read N- to C-terminus: Pentatricopeptide repeat-containing protein At4g39620, chloroplastic (563 aa).

The transit peptide at M1–T47 directs the protein to the chloroplast. PPR repeat units follow at residues D132–P166, D167–K197, N207–P241, D242–P276, D277–P311, T312–P346, S347–L381, K382–P416, and D417–P451. 2 disordered regions span residues P468–K501 and N520–M551. Residues N520 to Q537 show a composition bias toward basic and acidic residues.

The protein belongs to the PPR family. P subfamily.

The protein resides in the plastid. Its subcellular location is the chloroplast. In terms of biological role, essential for embryo development. The sequence is that of Pentatricopeptide repeat-containing protein At4g39620, chloroplastic from Arabidopsis thaliana (Mouse-ear cress).